The following is a 410-amino-acid chain: Sulfate adenylyltransferase (410 aa).

Belongs to the sulfate adenylyltransferase family.

The catalysed reaction is sulfate + ATP + H(+) = adenosine 5'-phosphosulfate + diphosphate. Its pathway is sulfur metabolism; hydrogen sulfide biosynthesis; sulfite from sulfate: step 1/3. The chain is Sulfate adenylyltransferase from Syntrophobacter fumaroxidans (strain DSM 10017 / MPOB).